Reading from the N-terminus, the 115-residue chain is uncharacterized protein (115 aa).

Positions 1-20 (MKTFFRTVLFGSLMAVCANS) are cleaved as a signal peptide.

This is an uncharacterized protein from Escherichia coli O6:H1 (strain CFT073 / ATCC 700928 / UPEC).